The following is an 89-amino-acid chain: Small ribosomal subunit protein uS15 (89 aa).

Positions 1–23 are disordered; it reads MSLDTTEKQQLINANQTHGTDTG. Polar residues predominate over residues 8–23; it reads KQQLINANQTHGTDTG.

Belongs to the universal ribosomal protein uS15 family. As to quaternary structure, part of the 30S ribosomal subunit. Forms a bridge to the 50S subunit in the 70S ribosome, contacting the 23S rRNA.

Its function is as follows. One of the primary rRNA binding proteins, it binds directly to 16S rRNA where it helps nucleate assembly of the platform of the 30S subunit by binding and bridging several RNA helices of the 16S rRNA. In terms of biological role, forms an intersubunit bridge (bridge B4) with the 23S rRNA of the 50S subunit in the ribosome. This chain is Small ribosomal subunit protein uS15, found in Prochlorococcus marinus (strain MIT 9313).